A 551-amino-acid polypeptide reads, in one-letter code: Nose resistant to fluoxetine protein 5 (551 aa).

An N-terminal signal peptide occupies residues 1–20 (MSRNFHIFFLLVSIIQVGNS). Cysteine 151 and cysteine 232 are disulfide-bonded. Residues 241 to 265 (EDSEQEEGNVETTVAPTPDDDNSTL) are disordered.

The protein belongs to the BPI/LBP/Plunc superfamily. BPI/LBP family. As to quaternary structure, interacts with ttr-52. In terms of tissue distribution, expressed in the body wall muscle cells and detected at the basal surface of pharyngeal cells and basal-lateral membranes of the intestine.

The protein localises to the secreted. Plays a role in the uptake of a range of molecules including phosphatidylserine, lipids and xenobiotic compounds from the intestine to surrounding tissues. Possesses lipid transfer activity. Mediates transport of lipids from intestine to reproductive tract. Binds phosphatidylserine. Plays a role in efficient clearance of cell corpses by mediating phosphatidylserine appearance on phagocytic cells, thus promoting phagocytic engulfment of apoptotic cells. Vital for embryonic development. The chain is Nose resistant to fluoxetine protein 5 from Caenorhabditis elegans.